We begin with the raw amino-acid sequence, 311 residues long: Formyltransferase/hydrolase complex subunit D (311 aa).

The protein belongs to the FTR family. In terms of assembly, homotetramer. Octaheteromer. Part of the formyltransferase/hydrolase complex fhc; composed of FhcA, FhcB, FhcC and FhcD.

It is found in the cytoplasm. It catalyses the reaction N-formylmethanofuran + 5,6,7,8-tetrahydromethanopterin + H(+) = N(5)-formyl-5,6,7,8-tetrahydromethanopterin + methanofuran. Its pathway is one-carbon metabolism; formaldehyde degradation; formate from formaldehyde (H(4)MPT route): step 4/5. Functionally, involved in the transformation of 5-formyl tetrahydromethanopterin (5-formyl-H(4)MPT) to methanofuran (MFR) and formate via the intermediate formylmethanofuran (formyl-MFR). Catalyzes the transfer of a formyl group from 5-formyl-H(4)MPT to MFR to produce tetrahydromethanopterin (H(4)MPT) and formyl-MFR, which is then hydrolyzed to formate and MFR. The protein is Formyltransferase/hydrolase complex subunit D of Methylorubrum extorquens (strain ATCC 14718 / DSM 1338 / JCM 2805 / NCIMB 9133 / AM1) (Methylobacterium extorquens).